The following is a 307-amino-acid chain: MLVYIAGSGAMGCRFGYQISKTNNDVILLDNWEDHINAIKENGLVVTGDVEETVKLPIMKPTEATQEADLIILFTKAMQLPQMLQDIKGIIGKETKVLCLLNGLGHEDVIRQYIPEHNILMGVTVWTAGLEGPGRAHLQGVGALNLQSMDPSNQEAGHQVADLLNEANLNATYDENVVPNIWRKACVNGTMNSTCALLDCTIGELFASEDGLKMVKEIIHEFVIVGQAEGVELNEEEITQYVMDTSVKAAHHYPSMHQDLVQNHRLTEIDFINGAVNTKGEKLGINTPYCRMITELVHAKEAVLNIQ.

Residues 7–12 (GSGAMG), Asn-102, and Ala-128 contribute to the NADP(+) site. Asn-102 provides a ligand contact to substrate. The active-site Proton donor is Lys-184. 3 residues coordinate substrate: Asn-188, Asn-192, and Ser-255. Glu-268 is an NADP(+) binding site.

It belongs to the ketopantoate reductase family.

Its subcellular location is the cytoplasm. The enzyme catalyses (R)-pantoate + NADP(+) = 2-dehydropantoate + NADPH + H(+). It functions in the pathway cofactor biosynthesis; (R)-pantothenate biosynthesis; (R)-pantoate from 3-methyl-2-oxobutanoate: step 2/2. In terms of biological role, catalyzes the NADPH-dependent reduction of ketopantoate into pantoic acid. The sequence is that of 2-dehydropantoate 2-reductase (apbA) from Streptococcus pyogenes serotype M1.